The sequence spans 271 residues: Ferric vulnibactin reductase VuuB (271 aa).

Positions Val-8–Ile-131 constitute an FAD-binding FR-type domain.

It belongs to the SIP oxidoreductase family. In terms of assembly, monomer. Requires FAD as cofactor.

The protein resides in the cytoplasm. It carries out the reaction 2 a Fe(II)-siderophore + NAD(+) + H(+) = 2 a Fe(III)-siderophore + NADH. Ferric-siderophore reductase involved in iron removal from the siderophores after their transport into the cell. Acts as a major ferric-vulnibactin reductase catalyzing the reduction of Fe(3+)-vulnibactin, a catecholate siderophore synthesized by V.vulnificus. The sequence is that of Ferric vulnibactin reductase VuuB from Vibrio vulnificus (strain CMCP6).